The chain runs to 131 residues: Large ribosomal subunit protein bL19 (131 aa).

The protein belongs to the bacterial ribosomal protein bL19 family.

Its function is as follows. This protein is located at the 30S-50S ribosomal subunit interface and may play a role in the structure and function of the aminoacyl-tRNA binding site. This chain is Large ribosomal subunit protein bL19, found in Synechococcus sp. (strain CC9902).